The chain runs to 500 residues: L-arabinose isomerase (500 aa).

Mn(2+) is bound by residues glutamate 306, glutamate 333, histidine 350, and histidine 450.

It belongs to the arabinose isomerase family. Homohexamer. Mn(2+) serves as cofactor.

The enzyme catalyses beta-L-arabinopyranose = L-ribulose. It participates in carbohydrate degradation; L-arabinose degradation via L-ribulose; D-xylulose 5-phosphate from L-arabinose (bacterial route): step 1/3. Its function is as follows. Catalyzes the conversion of L-arabinose to L-ribulose. This Yersinia pseudotuberculosis serotype O:3 (strain YPIII) protein is L-arabinose isomerase.